A 293-amino-acid polypeptide reads, in one-letter code: ATP synthase subunit a (293 aa).

8 helical membrane-spanning segments follow: residues 39–59, 73–93, 102–122, 128–148, 172–192, 198–218, 224–244, and 245–265; these read QVFG…VYWI, FVLL…DLIG, YFLM…LGGI, SLTF…IMGI, TLIP…SISL, ILGG…AFST, LALS…HVYF, and DVVV…NYWA.

It belongs to the ATPase A chain family. In terms of assembly, F-type ATPases have 2 components, CF(1) - the catalytic core - and CF(0) - the membrane proton channel. CF(1) has five subunits: alpha(3), beta(3), gamma(1), delta(1), epsilon(1). CF(0) has three main subunits: a(1), b(2) and c(9-12). The alpha and beta chains form an alternating ring which encloses part of the gamma chain. CF(1) is attached to CF(0) by a central stalk formed by the gamma and epsilon chains, while a peripheral stalk is formed by the delta and b chains.

It localises to the cell membrane. Key component of the proton channel; it plays a direct role in the translocation of protons across the membrane. The chain is ATP synthase subunit a from Mycoplasma pneumoniae (strain ATCC 29342 / M129 / Subtype 1) (Mycoplasmoides pneumoniae).